Here is a 799-residue protein sequence, read N- to C-terminus: Protein-lysine N-methyltransferase SMYD4 (799 aa).

112–114 (RSA) lines the S-adenosyl-L-methionine pocket. Positions 233-570 (LSVSLCTHPL…KGQEILHCYG (338 aa)) constitute an SET domain. Zn(2+) is bound by residues cysteine 296, cysteine 299, cysteine 309, cysteine 312, cysteine 318, cysteine 322, histidine 331, and cysteine 335. The MYND-type zinc-finger motif lies at 296–335 (CHRCLKHTLATVPCGSCSYAKYCSQECMQQAWDLYHSTEC). S-adenosyl-L-methionine contacts are provided by residues 535–536 (NH), tyrosine 569, and phenylalanine 591.

This sequence belongs to the class V-like SAM-binding methyltransferase superfamily. As to quaternary structure, interacts (via MYND-type zinc finger) with HDAC1.

It localises to the nucleus. The protein localises to the cytoplasm. The enzyme catalyses L-lysyl-[protein] + S-adenosyl-L-methionine = N(6)-methyl-L-lysyl-[protein] + S-adenosyl-L-homocysteine + H(+). Functionally, protein-lysine N-methyltransferase. Monomethylates PRMT5, modulating its transcriptional activity. May also act as a histone methyltransferase. Plays a critical role in cardiac development. Acts as a key epigenetic regulator of gene expression during cardiac development via its dual activities as a methyltransferase and negative regulator of HDAC1. This is Protein-lysine N-methyltransferase SMYD4 (Smyd4) from Mus musculus (Mouse).